The following is a 272-amino-acid chain: NADH-cytochrome b5 reductase 3 (272 aa).

One can recognise an FAD-binding FR-type domain in the interval 11–123 (DIKYPLRLID…RGPNGLLVYQ (113 aa)). Lys13 carries the N6-acetyllysine modification. Tyr14 bears the Phosphotyrosine mark. The residue at position 21 (Lys21) is an N6-acetyllysine. Residues Arg63, Pro64, Tyr65, Val80, Lys82, and Tyr84 each contribute to the FAD site. An N6-acetyllysine modification is found at Lys91. Positions 97, 98, 99, and 156 each coordinate FAD.

The protein belongs to the flavoprotein pyridine nucleotide cytochrome reductase family. As to quaternary structure, component of a complex composed of cytochrome b5, NADH-cytochrome b5 reductase (CYB5R3) and MTARC2. Interacts with MTLN; the interaction is required to maintain cellular lipid composition and leads to stimulation of mitochondrial respiratory complex I activity. It depends on FAD as a cofactor.

It is found in the endoplasmic reticulum membrane. The protein resides in the mitochondrion outer membrane. The catalysed reaction is 2 Fe(III)-[cytochrome b5] + NADH = 2 Fe(II)-[cytochrome b5] + NAD(+) + H(+). In terms of biological role, catalyzes the reduction of two molecules of cytochrome b5 using NADH as the electron donor. The sequence is that of NADH-cytochrome b5 reductase 3 (CYB5R3) from Sus scrofa (Pig).